The sequence spans 454 residues: tRNA modification GTPase MnmE (454 aa).

Arg23, Glu80, and Lys120 together coordinate (6S)-5-formyl-5,6,7,8-tetrahydrofolate. A TrmE-type G domain is found at Gly216–Gly377. Residue Asn226 participates in K(+) binding. GTP-binding positions include Asn226–Ser231, Thr245–Thr251, Asp270–Gly273, Asn335–Asp338, and Ser358–Arg360. Residue Ser230 coordinates Mg(2+). K(+) is bound by residues Thr245, Ile247, and Thr250. A Mg(2+)-binding site is contributed by Thr251. Lys454 contributes to the (6S)-5-formyl-5,6,7,8-tetrahydrofolate binding site.

The protein belongs to the TRAFAC class TrmE-Era-EngA-EngB-Septin-like GTPase superfamily. TrmE GTPase family. Homodimer. Heterotetramer of two MnmE and two MnmG subunits. K(+) serves as cofactor.

It localises to the cytoplasm. Its function is as follows. Exhibits a very high intrinsic GTPase hydrolysis rate. Involved in the addition of a carboxymethylaminomethyl (cmnm) group at the wobble position (U34) of certain tRNAs, forming tRNA-cmnm(5)s(2)U34. In Salmonella paratyphi A (strain ATCC 9150 / SARB42), this protein is tRNA modification GTPase MnmE.